A 363-amino-acid polypeptide reads, in one-letter code: Proline/serine-rich coiled-coil protein 1 (363 aa).

A Phosphoserine modification is found at serine 22. Repeat 1 spans residues 38–41; sequence PEKP. The disordered stretch occupies residues 39–67; the sequence is EKPLRRGLSHRSDPNAVAPAPQGVRLSLG. Leucine 42 is subject to Phosphoserine. At glycine 45 the chain carries Phosphothreonine. A phosphoserine mark is found at serine 47, serine 65, serine 70, serine 98, serine 122, and serine 140. Repeat unit 2 spans residues 68 to 71; that stretch reads PLSP. Residues 70–94 adopt a coiled-coil conformation; it reads SPEKLEEILDEANRLAAQLEQCALQ. Residues 95–363 are disordered; sequence DRESAGEGLG…RKVAVPGPTR (269 aa). A 4 X 4 AA repeats of P-X-X-P region spans residues 103–246; it reads LGPRRVKPSP…HPSPPGPPTP (144 aa). Residues 112 to 124 are compositionally biased toward basic and acidic residues; it reads PRRETFVLKDSPV. Residues 133-148 are compositionally biased toward low complexity; that stretch reads SLTRSTPSPSSLTPRL. Threonine 145 is modified (phosphothreonine). Phosphoserine is present on residues serine 186 and serine 190. A compositionally biased stretch (polar residues) spans 186-196; sequence SPASSPLTRST. A compositionally biased stretch (low complexity) spans 197–210; it reads PPVRGRAGPSGRAA. Serine 212 carries the phosphoserine modification. Threonine 215 is modified (phosphothreonine). Repeat copies occupy residues 238–241 and 243–246.

Belongs to the PSRC1 family. Interacts with APC2. Interacts with KIF2A. Interacts with ANKRD53; recruits ANKRD53 to the spindle during mitosis. Phosphorylated during mitosis. In terms of tissue distribution, widely expressed in adult and fetal tissues, with highest expression in the adult brain and fetal thymus. Not detected in adult skeletal muscle.

Its subcellular location is the cytoplasm. The protein resides in the cytoskeleton. It is found in the spindle. The protein localises to the spindle pole. Required for normal progression through mitosis. Required for normal congress of chromosomes at the metaphase plate, and for normal rate of chromosomal segregation during anaphase. Plays a role in the regulation of mitotic spindle dynamics. Increases the rate of turnover of microtubules on metaphase spindles, and contributes to the generation of normal tension across sister kinetochores. Recruits KIF2A and ANKRD53 to the mitotic spindle and spindle poles. May participate in p53/TP53-regulated growth suppression. The chain is Proline/serine-rich coiled-coil protein 1 (PSRC1) from Homo sapiens (Human).